Reading from the N-terminus, the 92-residue chain is Small ribosomal subunit protein uS19 (92 aa).

This sequence belongs to the universal ribosomal protein uS19 family.

Functionally, protein S19 forms a complex with S13 that binds strongly to the 16S ribosomal RNA. This Neisseria gonorrhoeae (strain ATCC 700825 / FA 1090) protein is Small ribosomal subunit protein uS19.